The primary structure comprises 142 residues: Small ribosomal subunit protein uS12 (142 aa).

The tract at residues 1–30 (MGKTHGMGAARKLKSHRRTQRWADKSYKKS) is disordered. Positions 11 to 20 (RKLKSHRRTQ) are enriched in basic residues. The span at 21–30 (RWADKSYKKS) shows a compositional bias: basic and acidic residues. At proline 61 the chain carries Hydroxyproline.

This sequence belongs to the universal ribosomal protein uS12 family.

This is Small ribosomal subunit protein uS12 (RPS23) from Euphorbia esula (Leafy spurge).